Here is a 213-residue protein sequence, read N- to C-terminus: Phosphatidylcholine transfer protein (213 aa).

The residue at position 1 (methionine 1) is an N-acetylmethionine. The region spanning 1–212 is the START domain; the sequence is MDPGAGAFSE…MVKACQNYKK (212 aa). Tyrosine 72 and arginine 78 together coordinate a 1,2-diacyl-sn-glycero-3-phosphocholine. The residue at position 139 (serine 139) is a Phosphoserine. Glutamine 157 is an a 1,2-diacyl-sn-glycero-3-phosphocholine binding site. Positions 171–176 are part of the binding site for phosphatidylcholine; that stretch reads VFMYYF.

Interacts with ACOT13/THEM2.

Its subcellular location is the cytoplasm. Catalyzes the transfer of phosphatidylcholine between membranes. Binds phosphatidylcholine in a tight 1:1 stoichiometric complex. The protein is Phosphatidylcholine transfer protein (PCTP) of Bos taurus (Bovine).